A 559-amino-acid polypeptide reads, in one-letter code: MAAQGFLLIASFLLILLVLAKPLGSGLARLIAAVPLPGVAGVERILWRTLGITDHEMNWRQYLLALLTLNLLGLGILFCLLFWQEWLPLNPQRLPGLSWDLALNTAVSFVTNTNWQAYSGESTLSHFSQMAGLTVQNFLSAATGIAVVFALIRAFTRQNVHTLGNAWQDLVRITLWILFPVALIIALFFIQQGVPQNLSAYQPITTLEGAKQLLPMGPVASQEAIKMLGTNGGGFFNANSSHPFENPTALTNLAQMLAIFLIPAALCFAFGEAAGDRRQGRALLWAMSFIFVVCVAVVMWAEVQGNPHLLAAGADSSVNMEGKETRFGVLASSLFAVVTTAASCGAVNAMHDSFTALGGMVPMWLMQIGEVVFGGVGSGLYGMLLFVLLAVFIAGLMIGRTPEYLGKKIDVREMKMTALAILVTPMLVLLGSALAMMTDAGRSAMLNPGPHGFSEVLYAVSSAANNNGSAFAGLSANSPFWNCLLAFCMFVGRFGVIIPVMAIAGSLVSKKVQPASQGTLATHGALFIGLLIGTVLLVGALTFIPALALGPVAEHFSLP.

A run of 13 helical transmembrane segments spans residues 5-25 (GFLL…PLGS), 27-47 (LARL…RILW), 63-83 (LLAL…LLFW), 132-152 (GLTV…FALI), 170-190 (LVRI…LFFI), 253-273 (LAQM…FGEA), 283-303 (LLWA…WAEV), 327-347 (FGVL…CGAV), 356-376 (ALGG…FGGV), 379-399 (GLYG…LMIG), 416-436 (MTAL…ALAM), 484-504 (LLAF…MAIA), and 524-544 (GALF…LTFI).

It belongs to the KdpA family. The system is composed of three essential subunits: KdpA, KdpB and KdpC.

It is found in the cell inner membrane. Part of the high-affinity ATP-driven potassium transport (or Kdp) system, which catalyzes the hydrolysis of ATP coupled with the electrogenic transport of potassium into the cytoplasm. This subunit binds the periplasmic potassium ions and delivers the ions to the membrane domain of KdpB through an intramembrane tunnel. The sequence is that of Potassium-transporting ATPase potassium-binding subunit from Salmonella choleraesuis (strain SC-B67).